The chain runs to 365 residues: 2-aminoethylphosphonate--pyruvate transaminase (365 aa).

The residue at position 194 (Lys194) is an N6-(pyridoxal phosphate)lysine.

Belongs to the class-V pyridoxal-phosphate-dependent aminotransferase family. PhnW subfamily. As to quaternary structure, homodimer. Pyridoxal 5'-phosphate is required as a cofactor.

The catalysed reaction is (2-aminoethyl)phosphonate + pyruvate = phosphonoacetaldehyde + L-alanine. Involved in phosphonate degradation. The sequence is that of 2-aminoethylphosphonate--pyruvate transaminase from Bacillus cereus (strain 03BB102).